The primary structure comprises 76 residues: MNEVTFGEVIKSVRVSVVADVCGLTPKAIYKWLERGSLPRTEFTGETEYADKIAKASGGKYSAAQIRRIGKQQFVM.

The protein is 8.4 kDa cro protein (cro-HTT) of Escherichia coli (Bacteriophage HK022).